The following is a 427-amino-acid chain: 3-phosphoshikimate 1-carboxyvinyltransferase (427 aa).

Positions 22, 23, and 27 each coordinate 3-phosphoshikimate. Residue Lys22 coordinates phosphoenolpyruvate. Residues Gly96 and Arg124 each contribute to the phosphoenolpyruvate site. 3-phosphoshikimate-binding residues include Ser169, Ser170, Gln171, Ser197, Asp313, Asn336, and Lys340. Gln171 contacts phosphoenolpyruvate. The Proton acceptor role is filled by Asp313. Residues Arg344, Arg386, and Lys411 each coordinate phosphoenolpyruvate.

The protein belongs to the EPSP synthase family. As to quaternary structure, monomer.

It localises to the cytoplasm. The enzyme catalyses 3-phosphoshikimate + phosphoenolpyruvate = 5-O-(1-carboxyvinyl)-3-phosphoshikimate + phosphate. It participates in metabolic intermediate biosynthesis; chorismate biosynthesis; chorismate from D-erythrose 4-phosphate and phosphoenolpyruvate: step 6/7. Functionally, catalyzes the transfer of the enolpyruvyl moiety of phosphoenolpyruvate (PEP) to the 5-hydroxyl of shikimate-3-phosphate (S3P) to produce enolpyruvyl shikimate-3-phosphate and inorganic phosphate. In Salmonella schwarzengrund (strain CVM19633), this protein is 3-phosphoshikimate 1-carboxyvinyltransferase.